We begin with the raw amino-acid sequence, 382 residues long: Methylthioribose-1-phosphate isomerase (382 aa).

The active-site Proton donor is aspartate 261.

This sequence belongs to the eIF-2B alpha/beta/delta subunits family. MtnA subfamily.

It is found in the cytoplasm. The protein resides in the nucleus. It carries out the reaction 5-(methylsulfanyl)-alpha-D-ribose 1-phosphate = 5-(methylsulfanyl)-D-ribulose 1-phosphate. It functions in the pathway amino-acid biosynthesis; L-methionine biosynthesis via salvage pathway; L-methionine from S-methyl-5-thio-alpha-D-ribose 1-phosphate: step 1/6. Functionally, catalyzes the interconversion of methylthioribose-1-phosphate (MTR-1-P) into methylthioribulose-1-phosphate (MTRu-1-P). This Ricinus communis (Castor bean) protein is Methylthioribose-1-phosphate isomerase.